Here is a 274-residue protein sequence, read N- to C-terminus: 4-diphosphocytidyl-2-C-methyl-D-erythritol kinase (274 aa).

Lysine 14 is a catalytic residue. Residue 94–104 participates in ATP binding; sequence PMQAGLGGGSS. Aspartate 134 is a catalytic residue.

Belongs to the GHMP kinase family. IspE subfamily.

The enzyme catalyses 4-CDP-2-C-methyl-D-erythritol + ATP = 4-CDP-2-C-methyl-D-erythritol 2-phosphate + ADP + H(+). Its pathway is isoprenoid biosynthesis; isopentenyl diphosphate biosynthesis via DXP pathway; isopentenyl diphosphate from 1-deoxy-D-xylulose 5-phosphate: step 3/6. Its function is as follows. Catalyzes the phosphorylation of the position 2 hydroxy group of 4-diphosphocytidyl-2C-methyl-D-erythritol. The polypeptide is 4-diphosphocytidyl-2-C-methyl-D-erythritol kinase (Thermosipho melanesiensis (strain DSM 12029 / CIP 104789 / BI429)).